A 233-amino-acid chain; its full sequence is Probable GTP-binding protein EngB (233 aa).

Residues 21-228 (GLPEVALVGR…WRWIREHVQD (208 aa)) enclose the EngB-type G domain. GTP-binding positions include 29-36 (GRSNVGKS) and 56-60 (GRTQA). Residues serine 36 and threonine 58 each coordinate Mg(2+). A disordered region spans residues 68-87 (PQGKPRPEGEPQPDKDAGRT). Basic and acidic residues predominate over residues 72-85 (PRPEGEPQPDKDAG). Residues 107–110 (DMPG), 174–177 (TKAD), and 207–209 (FSA) contribute to the GTP site.

Belongs to the TRAFAC class TrmE-Era-EngA-EngB-Septin-like GTPase superfamily. EngB GTPase family. Requires Mg(2+) as cofactor.

In terms of biological role, necessary for normal cell division and for the maintenance of normal septation. This chain is Probable GTP-binding protein EngB, found in Symbiobacterium thermophilum (strain DSM 24528 / JCM 14929 / IAM 14863 / T).